The chain runs to 568 residues: 4-hydroxy-7-methoxy-3-oxo-3,4-dihydro-2H-1,4-benzoxazin-2-yl glucoside beta-D-glucosidase, chloroplastic (568 aa).

The transit peptide at Met1–Ala50 directs the protein to the chloroplast. A beta-D-glucoside is bound by residues Gln92, His194, and Asn239 to Glu240. The Proton donor role is filled by Glu240. Cys259 and Cys265 are joined by a disulfide. A beta-D-glucoside-binding positions include Tyr383, Glu456, Trp504, Glu511 to Trp512, and Phe520. Residue Glu456 is the Nucleophile of the active site.

This sequence belongs to the glycosyl hydrolase 1 family. Homohexamer. As to expression, expressed in seedlings, mesocotyl, coleoptile, leaf sheath, and roots.

The protein resides in the plastid. It is found in the chloroplast. It carries out the reaction DIMBOA beta-D-glucoside + H2O = DIMBOA + D-glucose. It catalyses the reaction DIBOA beta-D-glucoside + H2O = DIBOA + D-glucose. The enzyme catalyses Hydrolysis of terminal, non-reducing beta-D-glucosyl residues with release of beta-D-glucose.. Inhibited by castanospermine, Ag(+) and Cu(2+). 34% inhibition by Zn(2+) and not affected by EDTA. Its function is as follows. Involved in defense of young plant parts against pests via the production of benzoxazolinones (hydroxamic acids) from hydroxamic acid glucosides. The preferred substrate is DIBOA-beta-D-glucoside. Can also use esculin and genistein glucoside as substrates, but no activity with salicin, p-nitrophenyl-alpha-glucoside or substrates related to cell wall components. The polypeptide is 4-hydroxy-7-methoxy-3-oxo-3,4-dihydro-2H-1,4-benzoxazin-2-yl glucoside beta-D-glucosidase, chloroplastic (Secale cereale (Rye)).